The sequence spans 311 residues: tRNA pseudouridine synthase B (311 aa).

Asp52 (nucleophile) is an active-site residue.

It belongs to the pseudouridine synthase TruB family. Type 1 subfamily.

The enzyme catalyses uridine(55) in tRNA = pseudouridine(55) in tRNA. Its function is as follows. Responsible for synthesis of pseudouridine from uracil-55 in the psi GC loop of transfer RNAs. This is tRNA pseudouridine synthase B from Burkholderia mallei (strain ATCC 23344).